Reading from the N-terminus, the 233-residue chain is tRNA (guanine-N(7)-)-methyltransferase (233 aa).

Residues Glu-65, Glu-90, Asp-117, and Asp-139 each coordinate S-adenosyl-L-methionine. Residue Asp-139 is part of the active site. Residues Lys-143, Asp-175, and 212–215 (TRYE) contribute to the substrate site.

The protein belongs to the class I-like SAM-binding methyltransferase superfamily. TrmB family.

The enzyme catalyses guanosine(46) in tRNA + S-adenosyl-L-methionine = N(7)-methylguanosine(46) in tRNA + S-adenosyl-L-homocysteine. It participates in tRNA modification; N(7)-methylguanine-tRNA biosynthesis. In terms of biological role, catalyzes the formation of N(7)-methylguanine at position 46 (m7G46) in tRNA. In Roseobacter denitrificans (strain ATCC 33942 / OCh 114) (Erythrobacter sp. (strain OCh 114)), this protein is tRNA (guanine-N(7)-)-methyltransferase.